Reading from the N-terminus, the 72-residue chain is Translation initiation factor IF-1 (72 aa).

An S1-like domain is found at 1 to 72 (MTKEDSFEMH…SKGRIIFRSR (72 aa)).

This sequence belongs to the IF-1 family. As to quaternary structure, component of the 30S ribosomal translation pre-initiation complex which assembles on the 30S ribosome in the order IF-2 and IF-3, IF-1 and N-formylmethionyl-tRNA(fMet); mRNA recruitment can occur at any time during PIC assembly.

It is found in the cytoplasm. Its function is as follows. One of the essential components for the initiation of protein synthesis. Stabilizes the binding of IF-2 and IF-3 on the 30S subunit to which N-formylmethionyl-tRNA(fMet) subsequently binds. Helps modulate mRNA selection, yielding the 30S pre-initiation complex (PIC). Upon addition of the 50S ribosomal subunit IF-1, IF-2 and IF-3 are released leaving the mature 70S translation initiation complex. The sequence is that of Translation initiation factor IF-1 from Blochmanniella pennsylvanica (strain BPEN).